Here is a 363-residue protein sequence, read N- to C-terminus: Histone-lysine N-methyltransferase ASHH3 (363 aa).

Residues 63–114 (DDGIFCSCSSSSPGSSSTVCGSNCHCGMLFSSCSSSCKCGSECNNKPFQQRH) form the AWS domain. The region spanning 116 to 233 (KKMKLIQTEK…KGEHLTYDYQ (118 aa)) is the SET domain. The Post-SET domain occupies 239–255 (ADQDCHCGAVGCRRKLG).

This sequence belongs to the class V-like SAM-binding methyltransferase superfamily. Histone-lysine methyltransferase family. SET2 subfamily.

The protein localises to the nucleus. The protein resides in the chromosome. It is found in the centromere. The catalysed reaction is L-lysyl-[histone] + S-adenosyl-L-methionine = N(6)-methyl-L-lysyl-[histone] + S-adenosyl-L-homocysteine + H(+). In terms of biological role, histone methyltransferase. The protein is Histone-lysine N-methyltransferase ASHH3 (ASHH3) of Arabidopsis thaliana (Mouse-ear cress).